We begin with the raw amino-acid sequence, 172 residues long: MERAIQGNDTREQANGERWDGGSGGITSPFKLPDESPSWTEWRLYNDETNSNQDNPLGFKESWGFGKVVFKRYLRYDRTEASLHRVLGSWTGDSVNYAASRFLGANQVGCTYSIRFRGVSVTISGGSRTLQHLCEMAIRSKQELLQLTPVEVESNVSRGCPEGIETFKKESE.

A compositionally biased stretch (basic and acidic residues) spans 1-20 (MERAIQGNDTREQANGERWD). Residues 1-27 (MERAIQGNDTREQANGERWDGGSGGIT) form a disordered region.

This sequence belongs to the tombusvirus protein p19 family. Homodimer.

Its function is as follows. Acts as a suppressor of RNA-mediated gene silencing, also known as post-transcriptional gene silencing (PTGS), a mechanism of plant viral defense that limits the accumulation of viral RNAs. Binds to short interfering RNAs (siRNAs) with high affinity. Acts as a molecular caliper to specifically select siRNAs based on the length of the duplex region of the RNA. The chain is RNA silencing suppressor p19 from Dianthus caryophyllus (Carnation).